A 322-amino-acid chain; its full sequence is HPr kinase/phosphorylase (322 aa).

Active-site residues include His-143 and Lys-164. 158–165 (GRSGVGKS) is a binding site for ATP. Position 165 (Ser-165) interacts with Mg(2+). The active-site Proton acceptor; for phosphorylation activity. Proton donor; for dephosphorylation activity is the Asp-182. Residues 206 to 215 (MEIRGLGILN) are important for the catalytic mechanism of both phosphorylation and dephosphorylation. Glu-207 contacts Mg(2+). Residue Arg-250 is part of the active site. Residues 271–276 (PVKPGR) form an important for the catalytic mechanism of dephosphorylation region.

Belongs to the HPrK/P family. As to quaternary structure, homohexamer. The cofactor is Mg(2+).

The enzyme catalyses [HPr protein]-L-serine + ATP = [HPr protein]-O-phospho-L-serine + ADP + H(+). It catalyses the reaction [HPr protein]-O-phospho-L-serine + phosphate + H(+) = [HPr protein]-L-serine + diphosphate. Its function is as follows. Catalyzes the ATP- as well as the pyrophosphate-dependent phosphorylation of a specific serine residue in HPr, a phosphocarrier protein of the phosphoenolpyruvate-dependent sugar phosphotransferase system (PTS). HprK/P also catalyzes the pyrophosphate-producing, inorganic phosphate-dependent dephosphorylation (phosphorolysis) of seryl-phosphorylated HPr (P-Ser-HPr). The chain is HPr kinase/phosphorylase from Leptospira biflexa serovar Patoc (strain Patoc 1 / Ames).